Reading from the N-terminus, the 513-residue chain is Maturase K (513 aa).

Belongs to the intron maturase 2 family. MatK subfamily.

The protein resides in the plastid. The protein localises to the chloroplast. Its function is as follows. Usually encoded in the trnK tRNA gene intron. Probably assists in splicing its own and other chloroplast group II introns. The sequence is that of Maturase K from Typha latifolia (Bulrush).